The following is a 476-amino-acid chain: tRNA(Ile)-lysidine synthase (476 aa).

26-31 (SGGSDS) is a binding site for ATP.

The protein belongs to the tRNA(Ile)-lysidine synthase family.

It localises to the cytoplasm. It catalyses the reaction cytidine(34) in tRNA(Ile2) + L-lysine + ATP = lysidine(34) in tRNA(Ile2) + AMP + diphosphate + H(+). In terms of biological role, ligates lysine onto the cytidine present at position 34 of the AUA codon-specific tRNA(Ile) that contains the anticodon CAU, in an ATP-dependent manner. Cytidine is converted to lysidine, thus changing the amino acid specificity of the tRNA from methionine to isoleucine. The protein is tRNA(Ile)-lysidine synthase of Bartonella quintana (strain Toulouse) (Rochalimaea quintana).